We begin with the raw amino-acid sequence, 209 residues long: Orotate phosphoribosyltransferase (209 aa).

Residues R96, K100, H102, and 122 to 130 (EDLISTGGS) contribute to the 5-phospho-alpha-D-ribose 1-diphosphate site. S126 is a binding site for orotate.

Belongs to the purine/pyrimidine phosphoribosyltransferase family. PyrE subfamily. In terms of assembly, homodimer. Mg(2+) serves as cofactor.

It carries out the reaction orotidine 5'-phosphate + diphosphate = orotate + 5-phospho-alpha-D-ribose 1-diphosphate. The protein operates within pyrimidine metabolism; UMP biosynthesis via de novo pathway; UMP from orotate: step 1/2. Catalyzes the transfer of a ribosyl phosphate group from 5-phosphoribose 1-diphosphate to orotate, leading to the formation of orotidine monophosphate (OMP). In Streptococcus agalactiae serotype III (strain NEM316), this protein is Orotate phosphoribosyltransferase.